The following is a 383-amino-acid chain: Arginine biosynthesis bifunctional protein ArgJ (383 aa).

Residues T146, K168, T179, E259, N378, and S383 each coordinate substrate. Catalysis depends on T179, which acts as the Nucleophile.

The protein belongs to the ArgJ family. As to quaternary structure, heterotetramer of two alpha and two beta chains.

It localises to the cytoplasm. The enzyme catalyses N(2)-acetyl-L-ornithine + L-glutamate = N-acetyl-L-glutamate + L-ornithine. It carries out the reaction L-glutamate + acetyl-CoA = N-acetyl-L-glutamate + CoA + H(+). It participates in amino-acid biosynthesis; L-arginine biosynthesis; L-ornithine and N-acetyl-L-glutamate from L-glutamate and N(2)-acetyl-L-ornithine (cyclic): step 1/1. The protein operates within amino-acid biosynthesis; L-arginine biosynthesis; N(2)-acetyl-L-ornithine from L-glutamate: step 1/4. Functionally, catalyzes two activities which are involved in the cyclic version of arginine biosynthesis: the synthesis of N-acetylglutamate from glutamate and acetyl-CoA as the acetyl donor, and of ornithine by transacetylation between N(2)-acetylornithine and glutamate. This chain is Arginine biosynthesis bifunctional protein ArgJ, found in Streptomyces avermitilis (strain ATCC 31267 / DSM 46492 / JCM 5070 / NBRC 14893 / NCIMB 12804 / NRRL 8165 / MA-4680).